The primary structure comprises 117 residues: Immunoglobulin heavy variable 1-45 (117 aa).

An N-terminal signal peptide occupies residues 1–19 (MDWTWRILFLVAAVTDAYS). Residues 20–44 (QMQLVQSGAEVKKTGSSVKVSCKAS) form a framework-1 region. In terms of domain architecture, Ig-like spans 20–117 (QMQLVQSGAE…EDTAMYYCAR (98 aa)). Cysteine 41 and cysteine 115 are oxidised to a cystine. The complementarity-determining-1 stretch occupies residues 45–52 (GYTFTYRY). A framework-2 region spans residues 53 to 69 (LHWVRQAPGQALEWMGW). The complementarity-determining-2 stretch occupies residues 70–77 (ITPFNGNT). Residues 78-115 (NYAQKFQDRVTITRDRSMSTAYMELSSLRSEDTAMYYC) are framework-3. Residues 116–117 (AR) are complementarity-determining-3.

As to quaternary structure, immunoglobulins are composed of two identical heavy chains and two identical light chains; disulfide-linked.

The protein localises to the secreted. It localises to the cell membrane. V region of the variable domain of immunoglobulin heavy chains that participates in the antigen recognition. Immunoglobulins, also known as antibodies, are membrane-bound or secreted glycoproteins produced by B lymphocytes. In the recognition phase of humoral immunity, the membrane-bound immunoglobulins serve as receptors which, upon binding of a specific antigen, trigger the clonal expansion and differentiation of B lymphocytes into immunoglobulins-secreting plasma cells. Secreted immunoglobulins mediate the effector phase of humoral immunity, which results in the elimination of bound antigens. The antigen binding site is formed by the variable domain of one heavy chain, together with that of its associated light chain. Thus, each immunoglobulin has two antigen binding sites with remarkable affinity for a particular antigen. The variable domains are assembled by a process called V-(D)-J rearrangement and can then be subjected to somatic hypermutations which, after exposure to antigen and selection, allow affinity maturation for a particular antigen. This is Immunoglobulin heavy variable 1-45 from Homo sapiens (Human).